A 325-amino-acid polypeptide reads, in one-letter code: Glycerol-3-phosphate dehydrogenase [NAD(P)+] (325 aa).

The NADPH site is built by W15, R35, and K107. The sn-glycerol 3-phosphate site is built by K107, G135, and S137. Residue A139 participates in NADPH binding. Positions 190, 243, 253, 254, and 255 each coordinate sn-glycerol 3-phosphate. K190 serves as the catalytic Proton acceptor. R254 contacts NADPH. Positions 272 and 274 each coordinate NADPH.

The protein belongs to the NAD-dependent glycerol-3-phosphate dehydrogenase family.

The protein localises to the cytoplasm. The catalysed reaction is sn-glycerol 3-phosphate + NAD(+) = dihydroxyacetone phosphate + NADH + H(+). The enzyme catalyses sn-glycerol 3-phosphate + NADP(+) = dihydroxyacetone phosphate + NADPH + H(+). It participates in membrane lipid metabolism; glycerophospholipid metabolism. In terms of biological role, catalyzes the reduction of the glycolytic intermediate dihydroxyacetone phosphate (DHAP) to sn-glycerol 3-phosphate (G3P), the key precursor for phospholipid synthesis. In Afipia carboxidovorans (strain ATCC 49405 / DSM 1227 / KCTC 32145 / OM5) (Oligotropha carboxidovorans), this protein is Glycerol-3-phosphate dehydrogenase [NAD(P)+].